We begin with the raw amino-acid sequence, 461 residues long: Ribulose bisphosphate carboxylase (461 aa).

A substrate-binding site is contributed by asparagine 112. The Proton acceptor role is filled by lysine 167. Residue lysine 169 participates in substrate binding. The Mg(2+) site is built by lysine 192, aspartate 194, and glutamate 195. Lysine 192 carries the N6-carboxylysine modification. The active-site Proton acceptor is histidine 288. Arginine 289, histidine 322, and serine 369 together coordinate substrate.

The protein belongs to the RuBisCO large chain family. Type II subfamily. In terms of assembly, homodimer. It depends on Mg(2+) as a cofactor.

The enzyme catalyses 2 (2R)-3-phosphoglycerate + 2 H(+) = D-ribulose 1,5-bisphosphate + CO2 + H2O. The catalysed reaction is D-ribulose 1,5-bisphosphate + O2 = 2-phosphoglycolate + (2R)-3-phosphoglycerate + 2 H(+). Functionally, ruBisCO catalyzes two reactions: the carboxylation of D-ribulose 1,5-bisphosphate, the primary event in carbon dioxide fixation, as well as the oxidative fragmentation of the pentose substrate. Both reactions occur simultaneously and in competition at the same active site. This is Ribulose bisphosphate carboxylase from Rhodopseudomonas palustris (strain HaA2).